Reading from the N-terminus, the 132-residue chain is Small ribosomal subunit protein eS12 (132 aa).

At Ala-2 the chain carries N-acetylalanine. Residue Lys-129 is modified to N6-succinyllysine.

It belongs to the eukaryotic ribosomal protein eS12 family. As to quaternary structure, part of the small subunit (SSU) processome, composed of more than 70 proteins and the RNA chaperone small nucleolar RNA (snoRNA) U3. Subunit of the 40S ribosomal complex.

It is found in the nucleus. Its subcellular location is the nucleolus. Functionally, part of the small subunit (SSU) processome, first precursor of the small eukaryotic ribosomal subunit. During the assembly of the SSU processome in the nucleolus, many ribosome biogenesis factors, an RNA chaperone and ribosomal proteins associate with the nascent pre-rRNA and work in concert to generate RNA folding, modifications, rearrangements and cleavage as well as targeted degradation of pre-ribosomal RNA by the RNA exosome. Subunit of the 40S ribosomal complex. This chain is Small ribosomal subunit protein eS12 (Rps12), found in Rattus norvegicus (Rat).